Consider the following 260-residue polypeptide: Putative ATP-binding protein BAB2_1147 (260 aa).

In terms of domain architecture, ABC transporter spans 5-228 (ISFNNVVMRY…DLPYPRTEAI (224 aa)). ATP is bound at residue 37–44 (GPSGCGKS).

It belongs to the ABC transporter superfamily. The complex is composed of two ATP-binding proteins (BAB2_1147), two transmembrane proteins (BAB2_1148) and a solute-binding protein (BAB2_1146).

It is found in the cell inner membrane. Functionally, probably part of an ABC transporter complex. Probably Responsible for energy coupling to the transport system. The sequence is that of Putative ATP-binding protein BAB2_1147 from Brucella abortus (strain 2308).